The chain runs to 208 residues: MIGLVGRKVGMTRIFNEDGVSVPVTVIEIEANRVTQVKTLENDGYTAVQVTTGSKKANRVTKPEAGHFVKAGVEAGRGLWEFRTEGEEFTLGQEINVDIFADVKKVDVTGTSKGKGFQGGVKRWNFRTQDATHGNSLSHRVLGSIGQNQTPGRVFKGKKMAGHLGAERVTVQSLEVVRVDAERKLLLVKGSVPGAINGNVIVKPAVKA.

Position 149 is an N5-methylglutamine (Q149).

The protein belongs to the universal ribosomal protein uL3 family. In terms of assembly, part of the 50S ribosomal subunit. Forms a cluster with proteins L14 and L19. Methylated by PrmB.

Its function is as follows. One of the primary rRNA binding proteins, it binds directly near the 3'-end of the 23S rRNA, where it nucleates assembly of the 50S subunit. This chain is Large ribosomal subunit protein uL3, found in Haemophilus influenzae (strain PittGG).